The chain runs to 1959 residues: Sodium channel protein type 10 subunit alpha (1959 aa).

The Cytoplasmic portion of the chain corresponds to 1-125; it reads MEFPIGSVGT…FNLIRRTAIK (125 aa). Positions 30–53 are disordered; sequence AHGAAKKARAKHGERKGQDEKPRP. The segment covering 33-43 has biased composition (basic residues); the sequence is AAKKARAKHGE. Positions 44-53 are enriched in basic and acidic residues; it reads RKGQDEKPRP. The stretch at 116–404 is one I repeat; sequence FNLIRRTAIK…VTMAYEEQNQ (289 aa). A helical membrane pass occupies residues 126 to 149; sequence VSVHAWFSIFITITILFNCVCMTQ. The Extracellular portion of the chain corresponds to 150 to 154; it reads NDLPE. A helical transmembrane segment spans residues 155–174; that stretch reads KIEYAFTVIYTFEALIKILA. Residues 175 to 187 lie on the Cytoplasmic side of the membrane; that stretch reads RGFCLNEFTYLRD. A helical transmembrane segment spans residues 188-206; sequence PWNWLDFSVITLAYVGAAI. Residues 207–212 are Extracellular-facing; it reads DLRGIS. Residues 213–232 form a helical; Voltage-sensor membrane-spanning segment; it reads GLRTFRVLRALKTVSVIPGL. Over 233 to 248 the chain is Cytoplasmic; that stretch reads KVIVGALIHSVRKLAD. The helical transmembrane segment at 249–272 threads the bilayer; the sequence is VTILTVFCLSVFALVGLQLFKGNL. Topologically, residues 273 to 340 are extracellular; that stretch reads KNKCIKRSTD…PDFNYTSFDS (68 aa). A disulfide bond links cysteine 276 and cysteine 318. N-linked (GlcNAc...) asparagine glycosylation is found at asparagine 288, asparagine 311, and asparagine 334. Residues 341–365 constitute an intramembrane region (pore-forming); that stretch reads FAWAFLSLFRLMTQDSWERLYQQTL. The Extracellular segment spans residues 366–372; that stretch reads RASGKMY. A helical transmembrane segment spans residues 373 to 398; it reads MVFFVLVIFLGSFYLVNLILAVVTMA. Residues 399–659 lie on the Cytoplasmic side of the membrane; the sequence is YEEQNQATIA…KWMKFKMVLF (261 aa). Residues serine 440, serine 443, serine 466, and serine 478 each carry the phosphoserine modification. Disordered regions lie at residues 442-484 and 510-578; these read HSHN…YNQR and SQDV…ELTT. The span at 475 to 484 shows a compositional bias: polar residues; sequence SPQSDPYNQR. Over residues 523–533 the composition is skewed to basic and acidic residues; it reads GVFHGDHESHR. Phosphoserine is present on residues serine 612 and serine 615. The II repeat unit spans residues 647–911; that stretch reads CCPKWMKFKM…EDDGEVNNLQ (265 aa). A helical transmembrane segment spans residues 660-684; sequence ELVTDPFAELTITLCIVVNTIFMAM. The Extracellular portion of the chain corresponds to 685–695; the sequence is EHYPMTDAFDA. Residues 696-719 form a helical membrane-spanning segment; it reads MLQAGNIVFTVFFTMEMAFKIIAF. Residues 720 to 727 are Cytoplasmic-facing; it reads DPYYYFQK. A helical transmembrane segment spans residues 728 to 747; sequence KWNVFDCVIVTVSLLELSIA. Residues 748–753 are Extracellular-facing; the sequence is KKGSLS. Residues 754 to 773 form a helical; Voltage-sensor membrane-spanning segment; that stretch reads VLRTFRLLRVFKLAKSWPTL. Residues 774 to 789 lie on the Cytoplasmic side of the membrane; that stretch reads NTLIKIIGNSVGALGN. Residues 790 to 810 traverse the membrane as a helical segment; that stretch reads LTFILAIIVFIFALVGKQLLG. Topologically, residues 811–834 are extracellular; that stretch reads EDYGCRKDGTALWNEGQLRWHMCD. The pore-forming intramembrane region spans 835–855; the sequence is FFHSFLVIFRILCGEWIENMW. At 856–864 the chain is on the extracellular side; that stretch reads VCMQVSEKS. Cysteines 857 and 866 form a disulfide. A helical membrane pass occupies residues 865 to 890; sequence ICLILFLTVMVLGNLVVLNLFIALLL. The Cytoplasmic portion of the chain corresponds to 891-1149; it reads NSFSADNLTA…GWQVRKTCYR (259 aa). A compositionally biased stretch (acidic residues) spans 1004–1016; the sequence is GESDLDELEEDIE. Disordered stretches follow at residues 1004-1034 and 1071-1097; these read GESD…QQDQ and ATPQ…PDPE. Residues 1142-1451 form an III repeat; that stretch reads QVRKTCYRIV…KKYYNAMKKL (310 aa). The chain crosses the membrane as a helical span at residues 1150 to 1173; the sequence is IVEHSWFESFIIFMILLSSGALAF. Over 1174 to 1186 the chain is Extracellular; sequence EDNYLEQKPRVKS. Residues 1187–1212 form a helical membrane-spanning segment; sequence MLEYTDRVFTFIFVFEMLLKWVAYGF. Residues 1213-1218 lie on the Cytoplasmic side of the membrane; that stretch reads KKYFTN. Residues 1219–1240 form a helical membrane-spanning segment; the sequence is AWCWLDFLIVNISLTSLIAKIL. The Extracellular segment spans residues 1241–1244; sequence DYSD. A helical; Voltage-sensor transmembrane segment spans residues 1245–1266; it reads VASLKALRTLRALRPLRALSRF. At 1267–1285 the chain is on the cytoplasmic side; that stretch reads EGMRVVVDALVGAIPSIMN. A helical membrane pass occupies residues 1286 to 1313; that stretch reads VLLVCLIFWLIFSIMGVNLFAGKFSRCI. Topologically, residues 1314–1355 are extracellular; the sequence is DTSNNPFSVVNSTIVNNKSECRNQNHTGHFFWVNVKVNFDNV. Residues 1356–1377 constitute an intramembrane region (pore-forming); it reads AMGYLALLQVATFKGWMDIMYA. The Extracellular portion of the chain corresponds to 1378–1393; sequence AVDSREINSQPQWEDN. The helical transmembrane segment at 1394-1420 threads the bilayer; that stretch reads LYMYLYFVVFIIFGGFFTLNLFVGVII. Residues 1421-1473 lie on the Cytoplasmic side of the membrane; sequence DNFNQQKKKLGGQDIFMTEEQKKYYNAMKKLGSKKPQKPIPRPLNKYQGFVFD. The residue at position 1453 (serine 1453) is a Phosphoserine; by PKC. An IV repeat occupies 1460 to 1759; sequence IPRPLNKYQG…WEKFDPEATQ (300 aa). Residues 1474–1497 form a helical membrane-spanning segment; the sequence is IVTRQAFDIIIMVLICLNMITMMV. Residues 1498-1508 are Extracellular-facing; that stretch reads ETDGQSEEKTK. Residues 1509 to 1532 form a helical membrane-spanning segment; it reads ILGRINQFFVAVFTGECVMKMFAL. Topologically, residues 1533–1538 are cytoplasmic; the sequence is RQYYFT. The chain crosses the membrane as a helical span at residues 1539 to 1562; that stretch reads NGWNVFDFIVVILSIGSLVFSAIL. Residues 1563–1574 lie on the Extracellular side of the membrane; sequence KSLESYFSPTLF. A helical; Voltage-sensor membrane pass occupies residues 1575–1596; that stretch reads RVIRLARIGRILRLIRAAKGIR. Topologically, residues 1597–1611 are cytoplasmic; that stretch reads TLLFALMMSLPALFN. A helical membrane pass occupies residues 1612 to 1634; it reads IGLLLFLVMFIYSIFGMASFANV. At 1635-1648 the chain is on the extracellular side; that stretch reads VEEAGIDDMFNFQT. Residues 1649–1671 constitute an intramembrane region (pore-forming); the sequence is FGNSMLCLFQITTSAGWDGLLSP. Topologically, residues 1672–1699 are extracellular; that stretch reads ILNTGPPYCDPNLSNNNTSKGNCGSPTV. Residues 1700 to 1724 traverse the membrane as a helical segment; sequence GIVFFTTYIIISFLIVVNMYIAVIL. Topologically, residues 1725–1959 are cytoplasmic; sequence ENFNVATEES…SKEGDSPGPQ (235 aa). In terms of domain architecture, IQ spans 1853–1882; the sequence is EDISATVIQKAYRSYVLQRSLTLSNPLRVP. The segment at 1901 to 1959 is disordered; sequence ANDSGRLPDKSETTSATSFPPSYDSVTRGLSDRVNISTSNSMHNEDEVTSKEGDSPGPQ. Residues 1943–1959 are compositionally biased toward basic and acidic residues; that stretch reads HNEDEVTSKEGDSPGPQ.

Belongs to the sodium channel (TC 1.A.1.10) family. Nav1.8/SCN10A subfamily. In terms of assembly, the channel consists of an ion conducting pore forming alpha-subunit regulated by one or more associated auxiliary subunits SCN1B, SCN2B and SCN3B; electrophysiological properties may vary depending on the type of the associated beta subunits. Found in a number of complexes with PRX, DYNLT1 and PDZD2. Interacts with proteins such as FSTL1, PRX, DYNLT1, PDZD2, S100A10 and many others. Interacts with NEDD4 and NEDD4L. Post-translationally, ubiquitinated by NEDD4L; which promotes its endocytosis. Phosphorylation at Ser-1453 by PKC in a highly conserved cytoplasmic loop slows inactivation of the sodium channel and reduces peak sodium currents. In terms of processing, lacks the cysteine which covalently binds the conotoxin GVIIJ. This cysteine (position 816) is speculated in other sodium channel subunits alpha to be implied in covalent binding with the sodium channel subunit beta-2 or beta-4.

Its subcellular location is the cell membrane. It catalyses the reaction Na(+)(in) = Na(+)(out). Its function is as follows. Tetrodotoxin-resistant channel that mediates the voltage-dependent sodium ion permeability of excitable membranes. Assuming opened or closed conformations in response to the voltage difference across the membrane, the protein forms a sodium-selective channel through which sodium ions may pass in accordance with their electrochemical gradient. Plays a role in neuropathic pain mechanisms. The sequence is that of Sodium channel protein type 10 subunit alpha (Scn10a) from Onychomys torridus (Southern grasshopper mouse).